Here is a 190-residue protein sequence, read N- to C-terminus: Probable gluconokinase (190 aa).

An ATP-binding site is contributed by 7–14; sequence GVSGSGKT.

It belongs to the gluconokinase GntK/GntV family.

It catalyses the reaction D-gluconate + ATP = 6-phospho-D-gluconate + ADP + H(+). The protein operates within carbohydrate acid metabolism; D-gluconate degradation. This chain is Probable gluconokinase (idnk), found in Xenopus tropicalis (Western clawed frog).